The chain runs to 362 residues: DNA replication and repair protein RecF (362 aa).

Residue 30-37 coordinates ATP; sequence GDNAQGKT.

It belongs to the RecF family.

It is found in the cytoplasm. The RecF protein is involved in DNA metabolism; it is required for DNA replication and normal SOS inducibility. RecF binds preferentially to single-stranded, linear DNA. It also seems to bind ATP. The chain is DNA replication and repair protein RecF from Agathobacter rectalis (strain ATCC 33656 / DSM 3377 / JCM 17463 / KCTC 5835 / VPI 0990) (Eubacterium rectale).